We begin with the raw amino-acid sequence, 338 residues long: Ketoreductase azaE (338 aa).

Lys-41 and Tyr-166 together coordinate NADP(+).

This sequence belongs to the NAD(P)-dependent epimerase/dehydratase family. Dihydroflavonol-4-reductase subfamily.

It participates in secondary metabolite biosynthesis. Its function is as follows. Ketoreductase; part of the gene cluster that mediates the biosynthesis of azaphilones, a class of fungal metabolites characterized by a highly oxygenated pyrano-quinone bicyclic core and exhibiting a broad range of bioactivities. In the first step, the non-reducing polyketide synthase azaA forms the hexaketide precursor from successive condensations of five malonyl-CoA units, presumably with a simple acetyl-CoA starter unit. The reactive polyketide chain then undergoes a PT-mediated C2-C7 cyclization to afford the aromatic ring and is eventually released as an aldehyde through the R-domain. The putative ketoreductase azaE is proposed to catalyze the reduction of the terminal ketone resulting in the early culture product FK17-P2a. The monooxygenase azaH was demonstrated to be the only enzyme required to convert FK17-P2a to azanigerone E. AzaH first hydroxylates the benzaldehyde intermediate FK17-P2a at C4, which triggers the formation of the pyran-ring to afford azanigerone E. In parallel, the 2,4-dimethylhexanoyl chain is synthesized by the HR-PKS azaB and is proposed to be transferred to the C4-hydroxyl of azanigerone E by the acyltransferase azaD directly from the ACP domain of azaB. Alternatively, the 2,4-dimethyl-hexanoyl chain may be offloaded from the HR-PKS as a carboxylic acid and converted to an acyl-CoA by azaF. The resulting acyl-CoA molecule could then be taken up as a substrate by AzaD to form azanigerone B. To yield the carboxylic acid substituent in azanigerone A, the hydroxypropyl side chain of azanigerone B would need to undergo a C-C oxidative cleavage catalyzed by cytochrome P450 AzaI. AzaI is proposed to act on a vicinal diol that leads to a C-C bond scission either through an alkoxyradical intermediate or a peroxy complex. In the biosynthesis of azanigerone A, azanigerone B first undergoes hydroxylation at C10, possibly catalyzed by one of the two FAD-dependent monooxygenases encoded in the cluster, azaG or azaL, resulting in the vicinal diol azanigerone C. Oxidative cleavage of azanigerone C by azaI would yield the corresponding aldehyde derivative of azanigerone A. Finally, the dehydrogenase azaJ is proposed to convert the aldehyde functional group into the carboxylic acid, completing the conversion from azanigerone B to azanigerone A. Alternatively, the oxidation of aldehyde to carboxylic acid may be catalyzed by the same P450 enzyme azaI via consecutive oxidation or by endogenous alcohol dehydrogenase. The protein is Ketoreductase azaE of Aspergillus niger (strain ATCC 1015 / CBS 113.46 / FGSC A1144 / LSHB Ac4 / NCTC 3858a / NRRL 328 / USDA 3528.7).